A 392-amino-acid chain; its full sequence is Anhydro-N-acetylmuramic acid kinase (392 aa).

19 to 26 (GTSVDGID) is an ATP binding site.

The protein belongs to the anhydro-N-acetylmuramic acid kinase family.

The catalysed reaction is 1,6-anhydro-N-acetyl-beta-muramate + ATP + H2O = N-acetyl-D-muramate 6-phosphate + ADP + H(+). It participates in amino-sugar metabolism; 1,6-anhydro-N-acetylmuramate degradation. Its pathway is cell wall biogenesis; peptidoglycan recycling. Functionally, catalyzes the specific phosphorylation of 1,6-anhydro-N-acetylmuramic acid (anhMurNAc) with the simultaneous cleavage of the 1,6-anhydro ring, generating MurNAc-6-P. Is required for the utilization of anhMurNAc either imported from the medium or derived from its own cell wall murein, and thus plays a role in cell wall recycling. The polypeptide is Anhydro-N-acetylmuramic acid kinase (Trichormus variabilis (strain ATCC 29413 / PCC 7937) (Anabaena variabilis)).